The primary structure comprises 674 residues: Cysteine-rich receptor-like protein kinase 6 (674 aa).

Residues 1–24 (MSSLISFNFLFLFSFLTSSFTASA) form the signal peptide. The Extracellular segment spans residues 25 to 289 (QDPFYLNHYC…LPGKSGNSTV (265 aa)). 2 Gnk2-homologous domains span residues 28–132 (FYLN…HKNI) and 139–245 (NEGE…LYPF). N-linked (GlcNAc...) asparagine glycans are attached at residues Asn-36, Asn-43, Asn-61, Asn-70, Asn-104, Asn-178, and Asn-247. Residues 254 to 266 (PPLPPPPPPPPPR) show a composition bias toward pro residues. Positions 254–284 (PPLPPPPPPPPPRESLVSTPPISSSSLPGKS) are disordered. A compositionally biased stretch (low complexity) spans 268-284 (SLVSTPPISSSSLPGKS). Asn-286 carries N-linked (GlcNAc...) asparagine glycosylation. Residues 290 to 310 (LVVAVVVLAVLLFIALVGYCF) traverse the membrane as a helical segment. Residues 311-674 (LAKKKKKTFD…DESITDLYPR (364 aa)) are Cytoplasmic-facing. One can recognise a Protein kinase domain in the interval 351–637 (FAESNKIGRG…TLPVPRQPGF (287 aa)). Residues 357 to 365 (IGRGGFGEV) and Lys-379 contribute to the ATP site. Phosphotyrosine is present on Tyr-424. Asp-476 (proton acceptor) is an active-site residue. Ser-480 is modified (phosphoserine). Phosphothreonine is present on Thr-516. Tyr-524 is subject to Phosphotyrosine. The disordered stretch occupies residues 648-674 (LDSDQSTTTKSFPASIDDESITDLYPR). The span at 650–659 (SDQSTTTKSF) shows a compositional bias: polar residues.

It belongs to the protein kinase superfamily. Ser/Thr protein kinase family. CRK subfamily.

The protein resides in the membrane. It catalyses the reaction L-seryl-[protein] + ATP = O-phospho-L-seryl-[protein] + ADP + H(+). The catalysed reaction is L-threonyl-[protein] + ATP = O-phospho-L-threonyl-[protein] + ADP + H(+). This Arabidopsis thaliana (Mouse-ear cress) protein is Cysteine-rich receptor-like protein kinase 6 (CRK6).